The primary structure comprises 198 residues: Large ribosomal subunit protein bL25 (198 aa).

It belongs to the bacterial ribosomal protein bL25 family. CTC subfamily. As to quaternary structure, part of the 50S ribosomal subunit; part of the 5S rRNA/L5/L18/L25 subcomplex. Contacts the 5S rRNA. Binds to the 5S rRNA independently of L5 and L18.

In terms of biological role, this is one of the proteins that binds to the 5S RNA in the ribosome where it forms part of the central protuberance. In Lysinibacillus sphaericus (strain C3-41), this protein is Large ribosomal subunit protein bL25.